We begin with the raw amino-acid sequence, 445 residues long: FAS-associated factor 2 (445 aa).

Alanine 2 is subject to N-acetylalanine. Positions 12 to 48 constitute a UBA domain; that stretch reads EQTEKLLQFQDLTGIESMDQCRHTLEQHNWNIEAAVQ. Lysine 167 is subject to N6-acetyllysine. The stretch at 275–350 forms a coiled coil; sequence SERLEREERN…EEKERKLECL (76 aa). The tract at residues 299–361 is disordered; it reads ASLRADQEKE…PEPSPDDPES (63 aa). Residues 303–348 are compositionally biased toward basic and acidic residues; it reads ADQEKERKKREERERKRRKEEEVQQQKLAEERRRQNLQEEKERKLE. A UBX domain is found at 357 to 439; it reads DDPESVKIIF…GLSHTEVLFV (83 aa).

Identified in a complex that contains SEL1L, OS9, FAF2/UBXD8, UBE2J1/UBC6E and AUP1. Interacts with YOD1. Interacts (via N-terminus) with UBQLN2 (via C-terminus). Interacts with PNPLA2 and UBAC2. Interacts with ZFAND2B; probably through VCP. Interacts with LMBR1L. In terms of tissue distribution, broadly expressed, with highest levels in brain.

The protein localises to the cytoplasm. The protein resides in the lipid droplet. It localises to the endoplasmic reticulum. Functionally, plays an important role in endoplasmic reticulum-associated degradation (ERAD) that mediates ubiquitin-dependent degradation of misfolded endoplasmic reticulum proteins. By controlling the steady-state expression of the IGF1R receptor, indirectly regulates the insulin-like growth factor receptor signaling pathway. Involved in inhibition of lipid droplet degradation by binding to phospholipase PNPL2 and inhibiting its activity by promoting dissociation of PNPL2 from its endogenous activator, ABHD5 which inhibits the rate of triacylglycerol hydrolysis. Involved in stress granule disassembly: associates with ubiquitinated G3BP1 in response to heat shock, thereby promoting interaction between ubiquitinated G3BP1 and VCP, followed by G3BP1 extraction from stress granules and stress granule disassembly. The chain is FAS-associated factor 2 from Homo sapiens (Human).